The chain runs to 472 residues: 3-isopropylmalate dehydratase large subunit (472 aa).

A disordered region spans residues 61–80 (TPDHNVPTTQKERASGVEGI). Positions 353, 414, and 417 each coordinate [4Fe-4S] cluster.

It belongs to the aconitase/IPM isomerase family. LeuC type 1 subfamily. In terms of assembly, heterodimer of LeuC and LeuD. [4Fe-4S] cluster is required as a cofactor.

It catalyses the reaction (2R,3S)-3-isopropylmalate = (2S)-2-isopropylmalate. It functions in the pathway amino-acid biosynthesis; L-leucine biosynthesis; L-leucine from 3-methyl-2-oxobutanoate: step 2/4. Catalyzes the isomerization between 2-isopropylmalate and 3-isopropylmalate, via the formation of 2-isopropylmaleate. The protein is 3-isopropylmalate dehydratase large subunit of Saccharophagus degradans (strain 2-40 / ATCC 43961 / DSM 17024).